Consider the following 329-residue polypeptide: Probable carboxylesterase 8 (329 aa).

An Involved in the stabilization of the negatively charged intermediate by the formation of the oxyanion hole motif is present at residues 73-75 (HGG). Active-site residues include Ser161, Asp264, and His294.

Belongs to the 'GDXG' lipolytic enzyme family. As to expression, expressed in leaves, stems, flowers and siliques.

It catalyses the reaction a carboxylic ester + H2O = an alcohol + a carboxylate + H(+). In terms of biological role, carboxylesterase acting on esters with varying acyl chain length. The protein is Probable carboxylesterase 8 (CXE8) of Arabidopsis thaliana (Mouse-ear cress).